The primary structure comprises 264 residues: Thymidylate synthase (264 aa).

A dUMP-binding site is contributed by R21. Position 51 (H51) interacts with (6R)-5,10-methylene-5,6,7,8-tetrahydrofolate. 126–127 (RR) provides a ligand contact to dUMP. Catalysis depends on C146, which acts as the Nucleophile. DUMP contacts are provided by residues 166-169 (RSCD), N177, and 207-209 (HLY). Position 169 (D169) interacts with (6R)-5,10-methylene-5,6,7,8-tetrahydrofolate. A263 is a (6R)-5,10-methylene-5,6,7,8-tetrahydrofolate binding site.

This sequence belongs to the thymidylate synthase family. Bacterial-type ThyA subfamily. Homodimer.

The protein localises to the cytoplasm. The enzyme catalyses dUMP + (6R)-5,10-methylene-5,6,7,8-tetrahydrofolate = 7,8-dihydrofolate + dTMP. Its pathway is pyrimidine metabolism; dTTP biosynthesis. In terms of biological role, catalyzes the reductive methylation of 2'-deoxyuridine-5'-monophosphate (dUMP) to 2'-deoxythymidine-5'-monophosphate (dTMP) while utilizing 5,10-methylenetetrahydrofolate (mTHF) as the methyl donor and reductant in the reaction, yielding dihydrofolate (DHF) as a by-product. This enzymatic reaction provides an intracellular de novo source of dTMP, an essential precursor for DNA biosynthesis. This is Thymidylate synthase from Yersinia pseudotuberculosis serotype O:1b (strain IP 31758).